The following is a 151-amino-acid chain: Ribosome maturation factor RimP (151 aa).

Belongs to the RimP family.

It is found in the cytoplasm. Functionally, required for maturation of 30S ribosomal subunits. The chain is Ribosome maturation factor RimP from Crocosphaera subtropica (strain ATCC 51142 / BH68) (Cyanothece sp. (strain ATCC 51142)).